A 969-amino-acid polypeptide reads, in one-letter code: Proprotein convertase subtilisin/kexin type 6 (969 aa).

Residues 1 to 16 (MPPRAPPAPGPRPPPR) show a composition bias toward pro residues. Residues 1 to 39 (MPPRAPPAPGPRPPPRAAAATDTAAGAGGAGGAGGAGGP) form a disordered region. The first 63 residues, 1–63 (MPPRAPPAPG…LLALPAACSA (63 aa)), serve as a signal peptide directing secretion. The segment covering 26–39 (GAGGAGGAGGAGGP) has biased composition (gly residues). Positions 64 to 149 (PPPRPVYTNH…QQEVKRRVKR (86 aa)) are excised as a propeptide. Residues 168 to 487 (MWYLHCGDKN…FGLVDAEALV (320 aa)) form the Peptidase S8 domain. Active-site charge relay system residues include Asp-205 and His-246. Asn-259 carries an N-linked (GlcNAc...) asparagine glycan. The active-site Charge relay system is Ser-420. The P/Homo B domain occupies 495-635 (AVPSQHMCVA…SLILYGTAEH (141 aa)). The Cell attachment site signature appears at 553–555 (RGD). Residues 658 to 683 (EPPKAALSPSQVEVPEDEEDYTAQST) are disordered. 5 FU repeats span residues 692 to 739 (TSVC…GYFG), 743 to 790 (ARRC…GFYA), 794 to 838 (QKNC…GTYF), 842 to 887 (LIRC…GFYP), and 895 to 943 (HKVC…ETFC). Residues 695–930 (CHPECGDKGC…GFTQLGTSCI (236 aa)) form a CRM (Cys-rich motif) region. 2 N-linked (GlcNAc...) asparagine glycosylation sites follow: Asn-914 and Asn-932. Residues 931 to 969 (TNHTCSNADETFCEMVKSNRLCERKLFIQFCCRTCLLAG) enclose the PLAC domain.

The protein belongs to the peptidase S8 family. As to quaternary structure, the PACE4A-I precursor protein seems to exist in the reticulum endoplasmic as both a monomer and a dimer-sized complex whereas mature PACE4A-I exists only as a monomer, suggesting that propeptide cleavage affects its tertiary or quaternary structure. Interacts (immature form including the propeptide) with RCN3; probably involved in the maturation and the secretion of PCSK6. Ca(2+) serves as cofactor. In terms of tissue distribution, each PACE4 isoform exhibits a unique restricted distribution. Isoform PACE4A-I is expressed in heart, brain, placenta, lung, skeletal muscle, kidney, pancreas, but at comparatively higher levels in the liver. Isoform PACE4A-II is at least expressed in placenta. Isoform PACE4B was only found in the embryonic kidney cell line from which it was isolated. Isoform PACE4C and isoform PACE4D are expressed in placenta. Isoform PACE4E-I is expressed in cerebellum, placenta and pituitary. Isoform PACE4E-II is at least present in cerebellum.

Its subcellular location is the secreted. It localises to the endoplasmic reticulum. The protein resides in the endomembrane system. Serine endoprotease that processes various proproteins by cleavage at paired basic amino acids, recognizing the RXXX[KR]R consensus motif. Likely functions in the constitutive secretory pathway, with unique restricted distribution in both neuroendocrine and non-neuroendocrine tissues. The sequence is that of Proprotein convertase subtilisin/kexin type 6 (PCSK6) from Homo sapiens (Human).